A 137-amino-acid chain; its full sequence is Holo-[acyl-carrier-protein] synthase (137 aa).

Residues Asp-7 and Glu-58 each coordinate Mg(2+).

It belongs to the P-Pant transferase superfamily. AcpS family. Requires Mg(2+) as cofactor.

Its subcellular location is the cytoplasm. It catalyses the reaction apo-[ACP] + CoA = holo-[ACP] + adenosine 3',5'-bisphosphate + H(+). Functionally, transfers the 4'-phosphopantetheine moiety from coenzyme A to a Ser of acyl-carrier-protein. This is Holo-[acyl-carrier-protein] synthase from Chloroflexus aurantiacus (strain ATCC 29366 / DSM 635 / J-10-fl).